Here is a 471-residue protein sequence, read N- to C-terminus: UDP-N-acetylmuramoylalanine--D-glutamate ligase (471 aa).

122 to 128 (GTNGKTT) is an ATP binding site.

This sequence belongs to the MurCDEF family.

It is found in the cytoplasm. The catalysed reaction is UDP-N-acetyl-alpha-D-muramoyl-L-alanine + D-glutamate + ATP = UDP-N-acetyl-alpha-D-muramoyl-L-alanyl-D-glutamate + ADP + phosphate + H(+). It participates in cell wall biogenesis; peptidoglycan biosynthesis. Cell wall formation. Catalyzes the addition of glutamate to the nucleotide precursor UDP-N-acetylmuramoyl-L-alanine (UMA). In Streptomyces coelicolor (strain ATCC BAA-471 / A3(2) / M145), this protein is UDP-N-acetylmuramoylalanine--D-glutamate ligase.